Reading from the N-terminus, the 275-residue chain is Dermonecrotic toxin LhSicTox-alphaVI1i (275 aa).

Histidine 5 is an active-site residue. 2 residues coordinate Mg(2+): glutamate 25 and aspartate 27. Catalysis depends on histidine 41, which acts as the Nucleophile. 2 cysteine pairs are disulfide-bonded: cysteine 45/cysteine 51 and cysteine 47/cysteine 192. Aspartate 85 provides a ligand contact to Mg(2+).

Belongs to the arthropod phospholipase D family. Class II subfamily. It depends on Mg(2+) as a cofactor. Expressed by the venom gland.

It is found in the secreted. It carries out the reaction an N-(acyl)-sphingosylphosphocholine = an N-(acyl)-sphingosyl-1,3-cyclic phosphate + choline. The enzyme catalyses an N-(acyl)-sphingosylphosphoethanolamine = an N-(acyl)-sphingosyl-1,3-cyclic phosphate + ethanolamine. The catalysed reaction is a 1-acyl-sn-glycero-3-phosphocholine = a 1-acyl-sn-glycero-2,3-cyclic phosphate + choline. It catalyses the reaction a 1-acyl-sn-glycero-3-phosphoethanolamine = a 1-acyl-sn-glycero-2,3-cyclic phosphate + ethanolamine. Its function is as follows. Dermonecrotic toxins cleave the phosphodiester linkage between the phosphate and headgroup of certain phospholipids (sphingolipid and lysolipid substrates), forming an alcohol (often choline) and a cyclic phosphate. This toxin acts on sphingomyelin (SM). It may also act on ceramide phosphoethanolamine (CPE), lysophosphatidylcholine (LPC) and lysophosphatidylethanolamine (LPE), but not on lysophosphatidylserine (LPS), and lysophosphatidylglycerol (LPG). It acts by transphosphatidylation, releasing exclusively cyclic phosphate products as second products. Induces dermonecrosis, hemolysis, increased vascular permeability, edema, inflammatory response, and platelet aggregation. The chain is Dermonecrotic toxin LhSicTox-alphaVI1i from Loxosceles hirsuta (Recluse spider).